Consider the following 262-residue polypeptide: Leucine-rich repeat-containing protein 18 (262 aa).

LRR repeat units lie at residues 28–49 (GRKR…ILRL), 51–72 (DIDE…IAKF), 74–95 (NLRW…IGQM), 97–118 (SLLF…VELN), 122–144 (NIRT…GALK), 145–167 (ELHE…AKLP), and 168–189 (KLKK…EMFV).

As to expression, exclusively expressed in spermatocytes and roud spermatids within seminiferous tubules during spermatogenesis.

The protein localises to the cytoplasm. May be involved in the regulation of spermatogenesis and sperm maturation. The protein is Leucine-rich repeat-containing protein 18 (Lrrc18) of Mus musculus (Mouse).